The sequence spans 543 residues: T-complex protein 1 subunit eta (543 aa).

At Met-1 the chain carries N-acetylmethionine. Gly-41 is a binding site for ADP. Gly-41 provides a ligand contact to ATP. Lys-67 bears the N6-acetyllysine mark. A Mg(2+)-binding site is contributed by Asp-92. Residues Gly-93, Thr-94, Thr-95, Ser-96, Ser-164, and Ser-165 each contribute to the ADP site. Gly-93 provides a ligand contact to ATP. Residue Ser-96 coordinates ATP. 2 positions are modified to N6-acetyllysine: Lys-250 and Lys-320. ATP-binding residues include Arg-398 and Gly-409. Residue Gly-409 participates in ADP binding. Lys-430 participates in a covalent cross-link: Glycyl lysine isopeptide (Lys-Gly) (interchain with G-Cter in SUMO2). ADP-binding residues include Glu-494 and Arg-499. Arg-499 serves as a coordination point for ATP. A disordered region spans residues 524–543 (RSTVDASPAAGRGRGRGRLH). Omega-N-methylarginine is present on Arg-535.

The protein belongs to the TCP-1 chaperonin family. As to quaternary structure, component of the chaperonin-containing T-complex (TRiC), a hexadecamer composed of two identical back-to-back stacked rings enclosing a protein folding chamber. Each ring is made up of eight different subunits: TCP1/CCT1, CCT2, CCT3, CCT4, CCT5, CCT6A/CCT6, CCT7, CCT8. Interacts with PACRG. Interacts with DLEC1.

The protein localises to the cytoplasm. The catalysed reaction is ATP + H2O = ADP + phosphate + H(+). Component of the chaperonin-containing T-complex (TRiC), a molecular chaperone complex that assists the folding of actin, tubulin and other proteins upon ATP hydrolysis. The TRiC complex mediates the folding of WRAP53/TCAB1, thereby regulating telomere maintenance. In Bos taurus (Bovine), this protein is T-complex protein 1 subunit eta (CCT7).